Consider the following 212-residue polypeptide: Uracil phosphoribosyltransferase (212 aa).

5-phospho-alpha-D-ribose 1-diphosphate is bound by residues Arg78, Arg103, and 130-138 (DPMLATGGS). Uracil-binding positions include Ile193 and 198-200 (GDA). Asp199 is a binding site for 5-phospho-alpha-D-ribose 1-diphosphate.

The protein belongs to the UPRTase family. The cofactor is Mg(2+).

The enzyme catalyses UMP + diphosphate = 5-phospho-alpha-D-ribose 1-diphosphate + uracil. It functions in the pathway pyrimidine metabolism; UMP biosynthesis via salvage pathway; UMP from uracil: step 1/1. With respect to regulation, allosterically activated by GTP. In terms of biological role, catalyzes the conversion of uracil and 5-phospho-alpha-D-ribose 1-diphosphate (PRPP) to UMP and diphosphate. This is Uracil phosphoribosyltransferase from Stutzerimonas stutzeri (strain A1501) (Pseudomonas stutzeri).